We begin with the raw amino-acid sequence, 2282 residues long: Protein Ycf2 (2282 aa).

1637-1644 contributes to the ATP binding site; it reads GSIGTGRS.

Belongs to the Ycf2 family.

The protein resides in the plastid. Its subcellular location is the chloroplast stroma. Its function is as follows. Probable ATPase of unknown function. Its presence in a non-photosynthetic plant (Epifagus virginiana) and experiments in tobacco indicate that it has an essential function which is probably not related to photosynthesis. In Citrus sinensis (Sweet orange), this protein is Protein Ycf2.